The following is a 73-amino-acid chain: DNA-directed RNA polymerase subunit omega (73 aa).

Belongs to the RNA polymerase subunit omega family. In terms of assembly, the RNAP catalytic core consists of 2 alpha, 1 beta, 1 beta' and 1 omega subunit. When a sigma factor is associated with the core the holoenzyme is formed, which can initiate transcription.

The catalysed reaction is RNA(n) + a ribonucleoside 5'-triphosphate = RNA(n+1) + diphosphate. Its function is as follows. Promotes RNA polymerase assembly. Latches the N- and C-terminal regions of the beta' subunit thereby facilitating its interaction with the beta and alpha subunits. This Clostridium novyi (strain NT) protein is DNA-directed RNA polymerase subunit omega.